Reading from the N-terminus, the 563-residue chain is BOS complex subunit NCLN (563 aa).

A signal peptide spans M1–A42. Over A43–A522 the chain is Lumenal. N-linked (GlcNAc...) asparagine glycosylation is found at N241 and N428. The chain crosses the membrane as a helical span at residues V523–V543. At Q544–Q563 the chain is on the cytoplasmic side.

This sequence belongs to the nicastrin family. Component of the back of Sec61 (BOS) complex, composed of NCLN/Nicalin, NOMO (NOMO1, NOMO2 or NOMO3) and TMEM147. The BOS complex is part of the multi-pass translocon (MPT) complex, composed of three subcomplexes, the GEL complex (composed of RAB5IF/OPTI and TMCO1), the BOS complex (composed of NCLN/Nicalin, NOMO and TMEM147) and the PAT complex (composed of WDR83OS/Asterix and CCDC47). The MPT complex associates with the SEC61 complex. As to expression, highly expressed in pancreas and skeletal muscle and, at lower levels, in heart.

The protein localises to the endoplasmic reticulum membrane. Component of the multi-pass translocon (MPT) complex that mediates insertion of multi-pass membrane proteins into the lipid bilayer of membranes. The MPT complex takes over after the SEC61 complex: following membrane insertion of the first few transmembrane segments of proteins by the SEC61 complex, the MPT complex occludes the lateral gate of the SEC61 complex to promote insertion of subsequent transmembrane regions. May antagonize Nodal signaling and subsequent organization of axial structures during mesodermal patterning, via its interaction with NOMO. This is BOS complex subunit NCLN from Homo sapiens (Human).